A 343-amino-acid chain; its full sequence is Flavone 3'-O-methyltransferase OMT2 (343 aa).

Asn107 is a binding site for (E)-ferulate. S-adenosyl-L-homocysteine is bound by residues Gly184, Asp207, Asp227, Met228, Met240, and Lys241. Catalysis depends on His245, which acts as the Proton acceptor. Residue Asp246 participates in (E)-5-hydroxyferulate binding. Catalysis depends on residues Glu273 and Glu305.

Belongs to the class I-like SAM-binding methyltransferase superfamily. Cation-independent O-methyltransferase family. COMT subfamily. In terms of assembly, homodimer.

It catalyses the reaction (E)-5-hydroxyferulate + S-adenosyl-L-methionine = (E)-sinapate + S-adenosyl-L-homocysteine + H(+). The catalysed reaction is luteolin + S-adenosyl-L-methionine = chrysoeriol + S-adenosyl-L-homocysteine + H(+). The enzyme catalyses quercetin + S-adenosyl-L-methionine = isorhamnetin + S-adenosyl-L-homocysteine + H(+). It carries out the reaction (E)-caffeate + S-adenosyl-L-methionine = (E)-ferulate + S-adenosyl-L-homocysteine + H(+). It catalyses the reaction a 3'-hydroxyflavone + S-adenosyl-L-methionine = a 3'-methoxyflavone + S-adenosyl-L-homocysteine + H(+). The protein operates within flavonoid metabolism. Functionally, catalyzes the 3'-O-methylation of the flavonoids luteolin and quercetin. Catalyzes the 3- of 5-O-methylation of the phenylpropanoids caffeate and 5-hydroxyferulate. Substrate preference is 5-hydroxyferulate &gt; luteolin &gt; quercetin &gt; caffeate. Apigenin, kempferol and 3,4-dimethylquercetin do not seem to be substrates for methylation. The polypeptide is Flavone 3'-O-methyltransferase OMT2 (Chrysosplenium americanum (American golden saxifrage)).